A 533-amino-acid polypeptide reads, in one-letter code: 2,3-bisphosphoglycerate-independent phosphoglycerate mutase (533 aa).

Positions 15 and 65 each coordinate Mn(2+). Ser-65 serves as the catalytic Phosphoserine intermediate. Residues His-126, Arg-156 to Asp-157, Arg-188, Arg-194, Arg-258 to Arg-261, and Lys-331 each bind substrate. Positions 398, 402, 439, 440, and 457 each coordinate Mn(2+).

This sequence belongs to the BPG-independent phosphoglycerate mutase family. As to quaternary structure, monomer. The cofactor is Mn(2+).

It carries out the reaction (2R)-2-phosphoglycerate = (2R)-3-phosphoglycerate. It functions in the pathway carbohydrate degradation; glycolysis; pyruvate from D-glyceraldehyde 3-phosphate: step 3/5. Functionally, catalyzes the interconversion of 2-phosphoglycerate and 3-phosphoglycerate. In Nostoc sp. (strain PCC 7120 / SAG 25.82 / UTEX 2576), this protein is 2,3-bisphosphoglycerate-independent phosphoglycerate mutase.